The sequence spans 73 residues: UPF0346 protein SAS1364 (73 aa).

The protein belongs to the UPF0346 family.

In Staphylococcus aureus (strain MSSA476), this protein is UPF0346 protein SAS1364.